Reading from the N-terminus, the 476-residue chain is Bifunctional protein HldE (476 aa).

The segment at 1-319 (MKVSLPAFEK…EALALHHGES (319 aa)) is ribokinase. Position 195-198 (195-198 (NMSE)) interacts with ATP. Aspartate 264 is a catalytic residue. Positions 345–476 (MTNGCFDILH…AIIQNIMANQ (132 aa)) are cytidylyltransferase.

In the N-terminal section; belongs to the carbohydrate kinase PfkB family. The protein in the C-terminal section; belongs to the cytidylyltransferase family. In terms of assembly, homodimer.

The enzyme catalyses D-glycero-beta-D-manno-heptose 7-phosphate + ATP = D-glycero-beta-D-manno-heptose 1,7-bisphosphate + ADP + H(+). The catalysed reaction is D-glycero-beta-D-manno-heptose 1-phosphate + ATP + H(+) = ADP-D-glycero-beta-D-manno-heptose + diphosphate. The protein operates within nucleotide-sugar biosynthesis; ADP-L-glycero-beta-D-manno-heptose biosynthesis; ADP-L-glycero-beta-D-manno-heptose from D-glycero-beta-D-manno-heptose 7-phosphate: step 1/4. It participates in nucleotide-sugar biosynthesis; ADP-L-glycero-beta-D-manno-heptose biosynthesis; ADP-L-glycero-beta-D-manno-heptose from D-glycero-beta-D-manno-heptose 7-phosphate: step 3/4. In terms of biological role, catalyzes the phosphorylation of D-glycero-D-manno-heptose 7-phosphate at the C-1 position to selectively form D-glycero-beta-D-manno-heptose-1,7-bisphosphate. Catalyzes the ADP transfer from ATP to D-glycero-beta-D-manno-heptose 1-phosphate, yielding ADP-D-glycero-beta-D-manno-heptose. The sequence is that of Bifunctional protein HldE from Shewanella baltica (strain OS155 / ATCC BAA-1091).